A 309-amino-acid chain; its full sequence is Homoserine O-succinyltransferase (309 aa).

The active-site Acyl-thioester intermediate is the cysteine 142. Substrate is bound by residues lysine 163 and serine 192. Histidine 235 acts as the Proton acceptor in catalysis. Glutamate 237 is a catalytic residue. Arginine 249 provides a ligand contact to substrate.

The protein belongs to the MetA family. Homodimer.

The protein resides in the cytoplasm. It catalyses the reaction L-homoserine + succinyl-CoA = O-succinyl-L-homoserine + CoA. It participates in amino-acid biosynthesis; L-methionine biosynthesis via de novo pathway; O-succinyl-L-homoserine from L-homoserine: step 1/1. Its function is as follows. Transfers a succinyl group from succinyl-CoA to L-homoserine, forming succinyl-L-homoserine. The chain is Homoserine O-succinyltransferase from Escherichia coli O139:H28 (strain E24377A / ETEC).